The primary structure comprises 424 residues: Histidine--tRNA ligase (424 aa).

Belongs to the class-II aminoacyl-tRNA synthetase family. Homodimer.

It is found in the cytoplasm. It catalyses the reaction tRNA(His) + L-histidine + ATP = L-histidyl-tRNA(His) + AMP + diphosphate + H(+). This is Histidine--tRNA ligase from Shigella sonnei (strain Ss046).